Consider the following 279-residue polypeptide: Phosphatidylglycerol--prolipoprotein diacylglyceryl transferase (279 aa).

7 helical membrane passes run 22-42 (SAHW…WSSI), 58-78 (ILYF…VIFY), 89-109 (FIFK…GSII), 128-148 (FLVP…FING), 195-215 (ISQL…LNIF), 223-243 (GYMS…AEFF), and 256-276 (YISL…ILII). A 1,2-diacyl-sn-glycero-3-phospho-(1'-sn-glycerol) is bound at residue arginine 141.

It belongs to the Lgt family.

The protein resides in the cell membrane. It carries out the reaction L-cysteinyl-[prolipoprotein] + a 1,2-diacyl-sn-glycero-3-phospho-(1'-sn-glycerol) = an S-1,2-diacyl-sn-glyceryl-L-cysteinyl-[prolipoprotein] + sn-glycerol 1-phosphate + H(+). The protein operates within protein modification; lipoprotein biosynthesis (diacylglyceryl transfer). Catalyzes the transfer of the diacylglyceryl group from phosphatidylglycerol to the sulfhydryl group of the N-terminal cysteine of a prolipoprotein, the first step in the formation of mature lipoproteins. The sequence is that of Phosphatidylglycerol--prolipoprotein diacylglyceryl transferase from Wigglesworthia glossinidia brevipalpis.